A 180-amino-acid polypeptide reads, in one-letter code: 3-hydroxyanthranilate 3,4-dioxygenase (180 aa).

Arg44 contributes to the O2 binding site. The Fe cation site is built by His48, Glu54, and His92. Position 54 (Glu54) interacts with substrate. Positions 96 and 106 each coordinate substrate. A divalent metal cation is bound by residues Cys121, Cys124, Cys158, and Cys161.

This sequence belongs to the 3-HAO family. Requires Fe(2+) as cofactor.

The protein localises to the cytoplasm. It catalyses the reaction 3-hydroxyanthranilate + O2 = (2Z,4Z)-2-amino-3-carboxymuconate 6-semialdehyde. It participates in cofactor biosynthesis; NAD(+) biosynthesis; quinolinate from L-kynurenine: step 3/3. Its function is as follows. Catalyzes the oxidative ring opening of 3-hydroxyanthranilate to 2-amino-3-carboxymuconate semialdehyde, which spontaneously cyclizes to quinolinate. The polypeptide is 3-hydroxyanthranilate 3,4-dioxygenase (bna1) (Neurospora crassa (strain ATCC 24698 / 74-OR23-1A / CBS 708.71 / DSM 1257 / FGSC 987)).